A 349-amino-acid polypeptide reads, in one-letter code: MLDLSLPSGLRDLLPDHSAHLAELSSKLHDVFSRFGYRRVFLPTLERLDVVERGLSPAALADVMKFVEPGSGEVVAIRPDITPQIARLYAARPDALPSPARLCYDGPVLRAREARAGRPREVYQAGVELLGAGGASADAEALVLLARSLERVGLKAPRVEVGHARFAEAVMEAARLPERLRSAAWEALSRKDRAALAAAAAKGRGSAEAREAVPQLAGLFGDGALDRARAIARAVPEAAASLAETEAALRIARRRGVREVAVDLGEARGLGYYTGITFAGYAPGAGAAVARGGRYDGLLARFGRPGPAIGFAVDLEFATQALERVNGRGRGVRPRRASARGGRARARPR.

The interval 327–349 is disordered; the sequence is GRGRGVRPRRASARGGRARARPR. Residues 330 to 349 show a composition bias toward basic residues; the sequence is RGVRPRRASARGGRARARPR.

The protein belongs to the class-II aminoacyl-tRNA synthetase family. HisZ subfamily. Heteromultimer composed of HisG and HisZ subunits.

The protein resides in the cytoplasm. Its pathway is amino-acid biosynthesis; L-histidine biosynthesis; L-histidine from 5-phospho-alpha-D-ribose 1-diphosphate: step 1/9. Required for the first step of histidine biosynthesis. May allow the feedback regulation of ATP phosphoribosyltransferase activity by histidine. This Anaeromyxobacter dehalogenans (strain 2CP-1 / ATCC BAA-258) protein is ATP phosphoribosyltransferase regulatory subunit.